Here is a 450-residue protein sequence, read N- to C-terminus: MQVQQPQQIQQQHLQQQQAQQHQQQQVQQHQQQQQQQQQQQQIYQQIVNQPVNNVHQLPSLQQQQLLEQYDELLKQVSLIRSNVSDFFNSFIEDAKQQQTIVNKEEMKQKLKKSMDLVLGSISSIDKVSKRISSYSFQIASSNFSTQEASWAYSTGIYDNRNIKVQLEIRNENYWRSQTSYKSSLASSNLENKLKDLFPIIFQEDEESSSLSKKRKQISSLTSNSLSTTTITTTTTPSPLFKLPSTPPTLLLSGTISPFYDYFAQIERVIHSIRQESALEIFEIQKQSSGAPKGLFVECPDVFKCLICFGIPNDRKDCFTIDRISFFGVKENFDSLWASSKYNIFKKISENSFEAISYYSANPNGGSILKCILSWIWSFRGLFLEECKGCQDILHLDSPQYMYLPPSFRTFDNYTPYHPSCYQNHLLSCNSFSSSTSSSIQQSPFSPLNK.

A coiled-coil region spans residues 15-118; the sequence is QQQQAQQHQQ…QKLKKSMDLV (104 aa).

The protein belongs to the Mediator complex subunit 27 family. In terms of assembly, component of the Mediator complex.

The protein resides in the nucleus. Its function is as follows. Component of the Mediator complex, a coactivator involved in the regulated transcription of nearly all RNA polymerase II-dependent genes. Mediator functions as a bridge to convey information from gene-specific regulatory proteins to the basal RNA polymerase II transcription machinery. Mediator is recruited to promoters by direct interactions with regulatory proteins and serves as a scaffold for the assembly of a functional preinitiation complex with RNA polymerase II and the general transcription factors. The protein is Putative mediator of RNA polymerase II transcription subunit 27 (med27) of Dictyostelium discoideum (Social amoeba).